Reading from the N-terminus, the 327-residue chain is o-succinylbenzoate synthase (327 aa).

K110 serves as the catalytic Proton donor. Positions 138, 165, and 188 each coordinate Mg(2+). K212 acts as the Proton acceptor in catalysis.

Belongs to the mandelate racemase/muconate lactonizing enzyme family. MenC type 1 subfamily. It depends on a divalent metal cation as a cofactor.

It catalyses the reaction (1R,6R)-6-hydroxy-2-succinyl-cyclohexa-2,4-diene-1-carboxylate = 2-succinylbenzoate + H2O. The protein operates within quinol/quinone metabolism; 1,4-dihydroxy-2-naphthoate biosynthesis; 1,4-dihydroxy-2-naphthoate from chorismate: step 4/7. It participates in quinol/quinone metabolism; menaquinone biosynthesis. Functionally, converts 2-succinyl-6-hydroxy-2,4-cyclohexadiene-1-carboxylate (SHCHC) to 2-succinylbenzoate (OSB). This Mycobacterium marinum (strain ATCC BAA-535 / M) protein is o-succinylbenzoate synthase.